A 435-amino-acid chain; its full sequence is Palmitoyltransferase pfa4 (435 aa).

Residues 1–10 (MLCSSFSVSR) lie on the Cytoplasmic side of the membrane. The helical transmembrane segment at 11–31 (LAIPAVCILIAFLAYTSQIFF) threads the bilayer. The Lumenal portion of the chain corresponds to 32 to 48 (LYFEDAPLKEDEVWRIN). A helical transmembrane segment spans residues 49 to 69 (ILAICIWICYYRACTVDPGHV). Over 70–129 (PKGWMPSDRERLKADRASGRQRWCRRCEAYKPPRAHHCKTCERCVPKMDHHCPWTSNCVS) the chain is Cytoplasmic. The region spanning 91 to 141 (RWCRRCEAYKPPRAHHCKTCERCVPKMDHHCPWTSNCVSHFTFPHFARFLF) is the DHHC domain. Residue cysteine 121 is the S-palmitoyl cysteine intermediate of the active site. A helical membrane pass occupies residues 130–150 (HFTFPHFARFLFYAVVGIAYL). Residues 151 to 179 (ETRLWQRVSKVWGSRHLPSYLGPSMGQIG) lie on the Lumenal side of the membrane. The chain crosses the membrane as a helical span at residues 180–200 (HLFVLFVTNSLTLFALSLLLL). Residues 201–435 (RTLWSLGSNT…QRAKRQHLSQ (235 aa)) are Cytoplasmic-facing. Residues 359–368 (RKPFHVRLEE) show a composition bias toward basic and acidic residues. A disordered region spans residues 359–408 (RKPFHVRLEEYSNGSSDAEADTGSDDDSDHGEEGWKNSEGERLRDFGVDE). The span at 376 to 388 (AEADTGSDDDSDH) shows a compositional bias: acidic residues. Over residues 389 to 405 (GEEGWKNSEGERLRDFG) the composition is skewed to basic and acidic residues.

The protein belongs to the DHHC palmitoyltransferase family. PFA4 subfamily.

Its subcellular location is the endoplasmic reticulum membrane. The enzyme catalyses L-cysteinyl-[protein] + hexadecanoyl-CoA = S-hexadecanoyl-L-cysteinyl-[protein] + CoA. Functionally, mediates the reversible addition of palmitate to target proteins, thereby regulating their membrane association and biological function. The sequence is that of Palmitoyltransferase pfa4 from Emericella nidulans (strain FGSC A4 / ATCC 38163 / CBS 112.46 / NRRL 194 / M139) (Aspergillus nidulans).